A 516-amino-acid chain; its full sequence is GPI mannosyltransferase 4 (516 aa).

The Lumenal segment spans residues 1-5; the sequence is MMRYQ. The helical transmembrane segment at 6–26 threads the bilayer; it reads WWLYLVYAIGLMLCLGPSYIH. Residues 27 to 60 are Cytoplasmic-facing; sequence PDEHFQCIEILAMQFMKVKGTIPWEFKSKFAARS. Residues 61 to 81 traverse the membrane as a helical segment; that stretch reads YGPLLLVYGPLFTILESFPEI. Topologically, residues 82 to 175 are lumenal; the sequence is QDNPALILYS…IQRSNFKNSV (94 aa). Residues 176 to 196 form a helical membrane-spanning segment; it reads ILGLIFSFGVFNRVTFPAFIF. The Cytoplasmic segment spans residues 197-210; the sequence is LPCLILFWKFYRVH. The chain crosses the membrane as a helical span at residues 211-231; that stretch reads WKSFSLLLLSFSFSSCLFVLI. At 232 to 270 the chain is on the lumenal side; sequence DTNIYNNGKGFVITPLNNLKYNLNVQNLQVHGLHPRYTH. Residues 271–291 form a helical membrane-spanning segment; that stretch reads LLVNLPQIVGPVLLLAIFSGY. At 292–295 the chain is on the cytoplasmic side; sequence KLDK. A helical membrane pass occupies residues 296-316; sequence LSTYAIISGLLFLSFFQHQEL. A topological domain (lumenal) is located at residue Arg317. Residues 318–338 form a helical membrane-spanning segment; it reads FLVPLVPLLVTNLNWTPLSST. Topologically, residues 339 to 348 are cytoplasmic; the sequence is LVNKKIFKGT. A helical transmembrane segment spans residues 349-369; sequence WLLFNIIMAFIMGISHQAGII. At 370–516 the chain is on the lumenal side; the sequence is QFLGDYFHFR…GLTVYSIELL (147 aa). Residues Asn403 and Asn452 are each glycosylated (N-linked (GlcNAc...) asparagine).

The protein belongs to the glycosyltransferase 22 family. PIGZ subfamily.

It is found in the endoplasmic reticulum membrane. Its pathway is glycolipid biosynthesis; glycosylphosphatidylinositol-anchor biosynthesis. Functionally, alpha-1,2-mannosyltransferase involved in glycosylphosphatidylinositol-anchor biosynthesis. Transfers a fourth mannose to trimannosyl-GPIs during GPI precursor assembly. The presence of a fourth mannose in GPI is essential in fungi. Involved in plasmid maintenance with SMP2. The protein is GPI mannosyltransferase 4 (SMP3) of Saccharomyces cerevisiae (strain ATCC 204508 / S288c) (Baker's yeast).